The chain runs to 327 residues: Replication factor C small subunit (327 aa).

47–54 (GPPGTGKT) contacts ATP.

The protein belongs to the activator 1 small subunits family. RfcS subfamily. As to quaternary structure, heteromultimer composed of small subunits (RfcS) and large subunits (RfcL).

Functionally, part of the RFC clamp loader complex which loads the PCNA sliding clamp onto DNA. The sequence is that of Replication factor C small subunit from Sulfurisphaera tokodaii (strain DSM 16993 / JCM 10545 / NBRC 100140 / 7) (Sulfolobus tokodaii).